The following is a 304-amino-acid chain: Thyroxine 5-deiodinase (304 aa).

Positions 1 to 23 are disordered; the sequence is MPRQATSRLVVGEGEGSQGASGP. Residues 1 to 44 lie on the Cytoplasmic side of the membrane; it reads MPRQATSRLVVGEGEGSQGASGPAATMLRSLLLHSLRLCAQTAS. A helical; Signal-anchor for type II membrane protein membrane pass occupies residues 45-67; the sequence is CLVLFPRFLGTAFMLWLLDFLCI. The Extracellular portion of the chain corresponds to 68 to 304; the sequence is RKHFLGRRRR…QLHGARPRRV (237 aa). Residues 78–99 form a disordered region; sequence GQPEPEVELNSEGEEVPPDDPP. Acidic residues predominate over residues 82 to 95; the sequence is PEVELNSEGEEVPP. The active site involves selenocysteine 170. Position 170 (selenocysteine 170) is a non-standard amino acid, selenocysteine.

The protein belongs to the iodothyronine deiodinase family. As to quaternary structure, monomer. Homodimer. May undergo minor heretodimerization with DIO1 and DIO2. As to expression, expressed in placenta and several fetal tissues.

Its subcellular location is the cell membrane. It is found in the endosome membrane. It carries out the reaction 3,3',5'-triiodo-L-thyronine + iodide + A + H(+) = L-thyroxine + AH2. The catalysed reaction is 3,3'-diiodo-L-thyronine + iodide + A + H(+) = 3,3',5-triiodo-L-thyronine + AH2. It catalyses the reaction 3-iodo-L-thyronine + iodide + A + H(+) = 3,5-diiodo-L-thyronine + AH2. The enzyme catalyses L-thyronine + iodide + A + H(+) = 3-iodo-L-thyronine + AH2. It carries out the reaction 3',5'-diiodo-L-thyronine + iodide + A + H(+) = 3,3',5'-triiodo-L-thyronine + AH2. The catalysed reaction is 3'-iodo-L-thyronine + iodide + A + H(+) = 3,3'-diiodo-L-thyronine + AH2. It catalyses the reaction 3,3',5'-triiodothyronamine + iodide + A + H(+) = 3,3',5,5'-tetraiodothyronamine + AH2. The enzyme catalyses 3',5'-diiodothyronamine + iodide + A + H(+) = 3,3',5'-triiodothyronamine + AH2. It carries out the reaction 3,3'-diiodothyronamine + iodide + A + H(+) = 3,3',5-triiodothyronamine + AH2. The catalysed reaction is 3-iodothyronamine + iodide + A + H(+) = 3,5-diiodothyronamine + AH2. It catalyses the reaction 3'-iodothyronamine + iodide + A + H(+) = 3,3'-diiodothyronamine + AH2. The enzyme catalyses thyronamine + iodide + A + H(+) = 3-iodothyronamine + AH2. Functionally, plays a crucial role in the metabolism of thyroid hormones (TH) and has specific roles in TH activation and inactivation by deiodination. Catalyzes the deiodination of L-thyroxine (T4) to 3,3',5'-triiodothyronine (rT3), 3,5,3'-triiodothyronine (T3) to 3,3'-diiodothyronine (3,3'-T2), 3,5-diiodothyronine (3,5-T2) to 3-monoiodothyronine (3-T1), rT3 to 3',5'-diiodothyronine (3',5'-T2) and 3,3'-T2 to 3'-monoiodothyronine (3'-T1) via inner-ring deiodination (IRD). Catalyzes the deiodination of 3-T1 to L-thyronine (T0) via outer-ring deiodination (ORD). Catalyzes the tyrosyl ring deiodinations of 3,3',5,5'-tetraiodothyronamine, 3,3',5'-triiodothyronamine, 3,5,3'-triiodothyronamine, 3,5-diiodothyronamine, 3,3'-diiodothyronamine and 3-iodothyronamine. This chain is Thyroxine 5-deiodinase (DIO3), found in Homo sapiens (Human).